The chain runs to 70 residues: ATP synthase subunit c (70 aa).

2 consecutive transmembrane segments (helical) span residues 4–24 (IAAG…NGLV) and 47–67 (FIGV…ALMV).

Belongs to the ATPase C chain family. F-type ATPases have 2 components, F(1) - the catalytic core - and F(0) - the membrane proton channel. F(1) has five subunits: alpha(3), beta(3), gamma(1), delta(1), epsilon(1). F(0) has three main subunits: a(1), b(2) and c(10-14). The alpha and beta chains form an alternating ring which encloses part of the gamma chain. F(1) is attached to F(0) by a central stalk formed by the gamma and epsilon chains, while a peripheral stalk is formed by the delta and b chains.

It is found in the cell membrane. Functionally, f(1)F(0) ATP synthase produces ATP from ADP in the presence of a proton or sodium gradient. F-type ATPases consist of two structural domains, F(1) containing the extramembraneous catalytic core and F(0) containing the membrane proton channel, linked together by a central stalk and a peripheral stalk. During catalysis, ATP synthesis in the catalytic domain of F(1) is coupled via a rotary mechanism of the central stalk subunits to proton translocation. Key component of the F(0) channel; it plays a direct role in translocation across the membrane. A homomeric c-ring of between 10-14 subunits forms the central stalk rotor element with the F(1) delta and epsilon subunits. This is ATP synthase subunit c from Lactiplantibacillus plantarum (strain ATCC BAA-793 / NCIMB 8826 / WCFS1) (Lactobacillus plantarum).